The chain runs to 151 residues: Small ribosomal subunit protein uS15 (151 aa).

N6-acetyllysine; alternate is present on lysine 27. Lysine 27 carries the N6-succinyllysine; alternate modification. A Glycyl lysine isopeptide (Lys-Gly) (interchain with G-Cter in ubiquitin) cross-link involves residue lysine 27. The residue at position 30 (serine 30) is a Phosphoserine. Position 34 is an N6-succinyllysine (lysine 34). Position 38 is a phosphotyrosine (tyrosine 38). Lysine 43 is covalently cross-linked (Glycyl lysine isopeptide (Lys-Gly) (interchain with G-Cter in SUMO2)).

It belongs to the universal ribosomal protein uS15 family. Component of the small ribosomal subunit. Part of the small subunit (SSU) processome, composed of more than 70 proteins and the RNA chaperone small nucleolar RNA (snoRNA) U3. Post-translationally, ubiquitinated at Lys-27 by RNF14 and RNF25 in response to ribosome collisions (ribosome stalling).

It is found in the cytoplasm. The protein localises to the nucleus. The protein resides in the nucleolus. Its function is as follows. Component of the small ribosomal subunit. The ribosome is a large ribonucleoprotein complex responsible for the synthesis of proteins in the cell. Part of the small subunit (SSU) processome, first precursor of the small eukaryotic ribosomal subunit. During the assembly of the SSU processome in the nucleolus, many ribosome biogenesis factors, an RNA chaperone and ribosomal proteins associate with the nascent pre-rRNA and work in concert to generate RNA folding, modifications, rearrangements and cleavage as well as targeted degradation of pre-ribosomal RNA by the RNA exosome. In Homo sapiens (Human), this protein is Small ribosomal subunit protein uS15.